Consider the following 122-residue polypeptide: Large ribosomal subunit protein uL18 (122 aa).

Belongs to the universal ribosomal protein uL18 family. In terms of assembly, part of the 50S ribosomal subunit; part of the 5S rRNA/L5/L18/L25 subcomplex. Contacts the 5S and 23S rRNAs.

In terms of biological role, this is one of the proteins that bind and probably mediate the attachment of the 5S RNA into the large ribosomal subunit, where it forms part of the central protuberance. This Thermotoga petrophila (strain ATCC BAA-488 / DSM 13995 / JCM 10881 / RKU-1) protein is Large ribosomal subunit protein uL18.